We begin with the raw amino-acid sequence, 253 residues long: Triosephosphate isomerase (253 aa).

N9–K11 lines the substrate pocket. H96 functions as the Electrophile in the catalytic mechanism. Residue E169 is the Proton acceptor of the active site. Residues G175, S215, and G236–G237 each bind substrate.

It belongs to the triosephosphate isomerase family. As to quaternary structure, homodimer.

It localises to the cytoplasm. The catalysed reaction is D-glyceraldehyde 3-phosphate = dihydroxyacetone phosphate. Its pathway is carbohydrate biosynthesis; gluconeogenesis. It participates in carbohydrate degradation; glycolysis; D-glyceraldehyde 3-phosphate from glycerone phosphate: step 1/1. Its function is as follows. Involved in the gluconeogenesis. Catalyzes stereospecifically the conversion of dihydroxyacetone phosphate (DHAP) to D-glyceraldehyde-3-phosphate (G3P). The chain is Triosephosphate isomerase from Borreliella burgdorferi (strain ZS7) (Borrelia burgdorferi).